Here is a 400-residue protein sequence, read N- to C-terminus: MFNKLVLILNCGSSSLKFSVVSSDNYTTKLSGIVEFLNLSQIRFFWKIKKKEYVRVINKSKSYDYALNYILTKILKEESKIFNNIACVGHRVVHGGVNLNKSVLITQEIIKLITDACSFAPLHNPINLLGIKASHAVLPHLKEKNVAVFDTSFHSSIPKFAYLYAIPYKFYKKFGIRKYGAHGISCQYSVCRSSELLQIELTSLNIIICHLGGGASVSVVKNGVCVDTSMGLTPLEGLIMGTRSGDIDPSVIFFMNKQLNLSISTINNILINKSGLLGLSGVSSDFRNLESEYNSNIRIKLAIDMFCYRLSKYISGYMSVVKGKLHGIVFTGGIGENSSLVRSIVISKLAFLNFKLNSDINMLMKSGKEGFINIKNTFPILVIPANEELIIAKESFSEIN.

Residue Asn-10 participates in Mg(2+) binding. Lys-17 lines the ATP pocket. Arg-91 is a substrate binding site. The active-site Proton donor/acceptor is the Asp-150. Residues 210 to 214, 285 to 287, and 333 to 337 contribute to the ATP site; these read HLGGG, DFR, and GIGEN. Position 387 (Glu-387) interacts with Mg(2+).

The protein belongs to the acetokinase family. As to quaternary structure, homodimer. Mg(2+) serves as cofactor. Mn(2+) is required as a cofactor.

Its subcellular location is the cytoplasm. The enzyme catalyses acetate + ATP = acetyl phosphate + ADP. The protein operates within metabolic intermediate biosynthesis; acetyl-CoA biosynthesis; acetyl-CoA from acetate: step 1/2. Its function is as follows. Catalyzes the formation of acetyl phosphate from acetate and ATP. Can also catalyze the reverse reaction. This is Acetate kinase from Buchnera aphidicola subsp. Baizongia pistaciae (strain Bp).